A 541-amino-acid polypeptide reads, in one-letter code: Glutamine-dependent NAD(+) synthetase (541 aa).

Positions 4–243 (FKIALAQFSP…EELYYSEFDI (240 aa)) constitute a CN hydrolase domain. The Proton acceptor; for glutaminase activity role is filled by Glu-44. The For glutaminase activity role is filled by Lys-111. Residue Tyr-117 coordinates L-glutamine. Cys-147 functions as the Nucleophile; for glutaminase activity in the catalytic mechanism. 2 residues coordinate L-glutamine: Ser-173 and Lys-179. 286 to 293 (GLSGGIDS) serves as a coordination point for ATP. Residue Asn-369 participates in deamido-NAD(+) binding. Residue Thr-393 participates in ATP binding. Deamido-NAD(+) is bound by residues Glu-398 and Lys-510.

In the C-terminal section; belongs to the NAD synthetase family.

The enzyme catalyses deamido-NAD(+) + L-glutamine + ATP + H2O = L-glutamate + AMP + diphosphate + NAD(+) + H(+). The protein operates within cofactor biosynthesis; NAD(+) biosynthesis; NAD(+) from deamido-NAD(+) (L-Gln route): step 1/1. Its function is as follows. Catalyzes the ATP-dependent amidation of deamido-NAD to form NAD. Uses L-glutamine as a nitrogen source. In vitro, can also use ammonia as donor with comparable specific activity, but cannot use nicotinate mononucleotide (NaMN) as substrate. The polypeptide is Glutamine-dependent NAD(+) synthetase (Acinetobacter baylyi (strain ATCC 33305 / BD413 / ADP1)).